Reading from the N-terminus, the 156-residue chain is Small ribosomal subunit protein uS7 (156 aa).

This sequence belongs to the universal ribosomal protein uS7 family. Part of the 30S ribosomal subunit. Contacts proteins S9 and S11.

Its function is as follows. One of the primary rRNA binding proteins, it binds directly to 16S rRNA where it nucleates assembly of the head domain of the 30S subunit. Is located at the subunit interface close to the decoding center, probably blocks exit of the E-site tRNA. The protein is Small ribosomal subunit protein uS7 of Sphingopyxis alaskensis (strain DSM 13593 / LMG 18877 / RB2256) (Sphingomonas alaskensis).